The primary structure comprises 270 residues: S-adenosylmethionine decarboxylase proenzyme (270 aa).

The active-site Schiff-base intermediate with substrate; via pyruvic acid is Ser-120. Ser-120 bears the Pyruvic acid (Ser); by autocatalysis mark. The active-site Proton acceptor; for processing activity is His-125. Cys-148 (proton donor; for catalytic activity) is an active-site residue.

It belongs to the prokaryotic AdoMetDC family. Type 2 subfamily. As to quaternary structure, heterooctamer of four alpha and four beta chains arranged as a tetramer of alpha/beta heterodimers. Requires pyruvate as cofactor. Post-translationally, is synthesized initially as an inactive proenzyme. Formation of the active enzyme involves a self-maturation process in which the active site pyruvoyl group is generated from an internal serine residue via an autocatalytic post-translational modification. Two non-identical subunits are generated from the proenzyme in this reaction, and the pyruvate is formed at the N-terminus of the alpha chain, which is derived from the carboxyl end of the proenzyme. The post-translation cleavage follows an unusual pathway, termed non-hydrolytic serinolysis, in which the side chain hydroxyl group of the serine supplies its oxygen atom to form the C-terminus of the beta chain, while the remainder of the serine residue undergoes an oxidative deamination to produce ammonia and the pyruvoyl group blocking the N-terminus of the alpha chain.

The catalysed reaction is S-adenosyl-L-methionine + H(+) = S-adenosyl 3-(methylsulfanyl)propylamine + CO2. Its pathway is amine and polyamine biosynthesis; S-adenosylmethioninamine biosynthesis; S-adenosylmethioninamine from S-adenosyl-L-methionine: step 1/1. Catalyzes the decarboxylation of S-adenosylmethionine to S-adenosylmethioninamine (dcAdoMet), the propylamine donor required for the synthesis of the polyamines spermine and spermidine from the diamine putrescine. This chain is S-adenosylmethionine decarboxylase proenzyme, found in Alkaliphilus oremlandii (strain OhILAs) (Clostridium oremlandii (strain OhILAs)).